The sequence spans 78 residues: UPF0349 protein RBAM_029300 (78 aa).

The protein belongs to the UPF0349 family.

This Bacillus velezensis (strain DSM 23117 / BGSC 10A6 / LMG 26770 / FZB42) (Bacillus amyloliquefaciens subsp. plantarum) protein is UPF0349 protein RBAM_029300.